The sequence spans 179 residues: UPF0134 protein MPN_145 (179 aa).

This sequence belongs to the UPF0134 family.

The chain is UPF0134 protein MPN_145 from Mycoplasma pneumoniae (strain ATCC 29342 / M129 / Subtype 1) (Mycoplasmoides pneumoniae).